The primary structure comprises 469 residues: Calcium/calmodulin-dependent protein kinase type IV (469 aa).

Phosphoserine; by autocatalysis is present on residues serine 11 and serine 12. Residues 42 to 296 (FEVESELGRG…TFQALQHPWV (255 aa)) enclose the Protein kinase domain. ATP contacts are provided by residues 48–56 (LGRGATSIV) and lysine 71. The O-linked (GlcNAc) threonine glycan is linked to threonine 53. Serine 54 is a glycosylation site (O-linked (GlcNAc) serine). O-linked (GlcNAc) serine glycosylation occurs at serine 133. Aspartate 160 (proton acceptor) is an active-site residue. Residue serine 185 is glycosylated (O-linked (GlcNAc) serine). Threonine 196 is modified (phosphothreonine). The tract at residues 297–336 (TGKAANFVHMDTAQKKLQEFNARRKLKAAVKAVVASSRLG) is autoinhibitory domain. The interval 302 to 319 (NFVHMDTAQKKLQEFNAR) is PP2A-binding. Positions 318 to 337 (ARRKLKAAVKAVVASSRLGS) are calmodulin-binding. A Phosphoserine; by autocatalysis modification is found at serine 332. The interval 336–469 (GSASSSHTSI…PQQDAIQPEY (134 aa)) is disordered. A Phosphoserine modification is found at serine 337. Residues serine 340, serine 341, and serine 352 are each glycosylated (O-linked (GlcNAc) serine). The span at 360–374 (DAKDSTDLLGKKMQE) shows a compositional bias: basic and acidic residues. A compositionally biased stretch (acidic residues) spans 375 to 388 (EDQEEDQVEAEASA). Basic and acidic residues predominate over residues 389–409 (DEMRKLQSEEVEKDAGVKEEE). The segment covering 417–426 (DPEDELETDD) has biased composition (acidic residues). Positions 427–441 (PEMKRDSEEKLKSVE) are enriched in basic and acidic residues. Residues serine 433 and serine 439 each carry the phosphoserine modification. The segment covering 442-453 (EEMDPMTEEEAP) has biased composition (acidic residues).

It belongs to the protein kinase superfamily. CAMK Ser/Thr protein kinase family. CaMK subfamily. In terms of assembly, monomer. Interacts with protein phosphatase 2A (PPP2CA/PPP2CB); the interaction is mutually exclusive with binding to Ca(2+)/calmodulin. Phosphorylated by CaMKK1 and CaMKK2 on Thr-196. Dephosphorylated by protein phosphatase 2A. Autophosphorylated on Ser-11 and Ser-12. Post-translationally, glycosylation at Ser-185 modulates the phosphorylation of CaMK4 at Thr-196 and negatively regulates its activity toward CREB1 in basal conditions and during early inomycin stimulation. In terms of tissue distribution, expressed in brain and testis.

It localises to the cytoplasm. The protein localises to the nucleus. The catalysed reaction is L-seryl-[protein] + ATP = O-phospho-L-seryl-[protein] + ADP + H(+). It carries out the reaction L-threonyl-[protein] + ATP = O-phospho-L-threonyl-[protein] + ADP + H(+). Activated by Ca(2+)/calmodulin. Binding of calmodulin results in conformational change that relieves intrasteric autoinhibition and allows phosphorylation of Thr-196 within the activation loop by CaMKK1 or CaMKK2. Phosphorylation of Thr-196 results in a 10-20-fold increase in total activity to generate Ca(2+)/calmodulin-independent activity. Autophosphorylation of the N-terminus Ser-11 and Ser-12 is required for full activation. Inactivated by protein phosphatase 2A (PPP2CA/PPP2CB) which dephosphorylates Thr-196, thereby terminating autonomous activity and helping to maintain the enzyme in its autoinhibited state. Its function is as follows. Calcium/calmodulin-dependent protein kinase that operates in the calcium-triggered CaMKK-CaMK4 signaling cascade and regulates, mainly by phosphorylation, the activity of several transcription activators, such as CREB1, MEF2D, JUN and RORA, which play pivotal roles in immune response, inflammation, and memory consolidation. In the thymus, regulates the CD4(+)/CD8(+) double positive thymocytes selection threshold during T-cell ontogeny. In CD4 memory T-cells, is required to link T-cell antigen receptor (TCR) signaling to the production of IL2, IFNG and IL4 (through the regulation of CREB and MEF2). Regulates the differentiation and survival phases of osteoclasts and dendritic cells (DCs). Mediates DCs survival by linking TLR4 and the regulation of temporal expression of BCL2. Phosphorylates the transcription activator CREB1 on 'Ser-133' in hippocampal neuron nuclei and contribute to memory consolidation and long term potentiation (LTP) in the hippocampus. Can activate the MAP kinases MAPK1/ERK2, MAPK8/JNK1 and MAPK14/p38 and stimulate transcription through the phosphorylation of ELK1 and ATF2. Can also phosphorylate in vitro CREBBP, PRM2, MEF2A and STMN1/OP18. May be involved in spermatogenesis. In Mus musculus (Mouse), this protein is Calcium/calmodulin-dependent protein kinase type IV (Camk4).